A 321-amino-acid chain; its full sequence is tRNA 2-thiolation protein NcsA (321 aa).

A Glycyl lysine isopeptide (Lys-Gly) (interchain with G-Cter in SAMP2) cross-link involves residue Lys-204.

Belongs to the TtcA family. CTU1/NCS6/ATPBD3 subfamily. In terms of assembly, interacts with monomeric and polymeric forms of SAMP2. Interacts with UbaA. Interacts with archaeal EF-1-alpha and Pan1. Non-sampylated protein forms a complex with archaeal CPSF1 of approximately 100 kDa. Post-translationally, sampylated at Lys-204 with the archaeal ubiquitin-like protein SAMP2. Polymeric chains of SAMP2 are also linked.

It functions in the pathway tRNA modification; 5-methoxycarbonylmethyl-2-thiouridine-tRNA biosynthesis. Functionally, required for thiolation of mcm(5)S(2)U at the wobble uridine position of tRNA specific for lysine (tRNA(Lys)). Probably acts by catalyzing adenylation of tRNA, an intermediate required for 2-thiolation. May also act as a sulfurtransferase that transfers sulfur from thiocarboxylated SAMP2 onto the uridine of tRNA at wobble position. Required for cell growth at elevated temperatures. This is tRNA 2-thiolation protein NcsA from Haloferax volcanii (strain ATCC 29605 / DSM 3757 / JCM 8879 / NBRC 14742 / NCIMB 2012 / VKM B-1768 / DS2) (Halobacterium volcanii).